The primary structure comprises 287 residues: Pyridoxal kinase PdxY (287 aa).

Substrate contacts are provided by residues Ser-9 and 44–45 (TQ). 3 residues coordinate ATP: Asp-111, Glu-147, and Lys-180. Residue Asp-221 participates in substrate binding.

It belongs to the pyridoxine kinase family. PdxY subfamily. In terms of assembly, homodimer. It depends on Mg(2+) as a cofactor.

It catalyses the reaction pyridoxal + ATP = pyridoxal 5'-phosphate + ADP + H(+). The protein operates within cofactor metabolism; pyridoxal 5'-phosphate salvage; pyridoxal 5'-phosphate from pyridoxal: step 1/1. Pyridoxal kinase involved in the salvage pathway of pyridoxal 5'-phosphate (PLP). Catalyzes the phosphorylation of pyridoxal to PLP. The polypeptide is Pyridoxal kinase PdxY (Paraburkholderia phymatum (strain DSM 17167 / CIP 108236 / LMG 21445 / STM815) (Burkholderia phymatum)).